We begin with the raw amino-acid sequence, 682 residues long: Potassium-transporting ATPase ATP-binding subunit (682 aa).

The next 4 helical transmembrane spans lie at 34-54, 58-78, 219-239, and 254-274; these read PVMF…LAMV, IAGS…TVLF, IALT…TATL, and VLVA…LSAI. Asp307 serves as the catalytic 4-aspartylphosphate intermediate. Residues Asp344, Glu348, 377 to 384, and Lys395 each bind ATP; that span reads FTAQSRMS. Mg(2+) is bound by residues Asp518 and Asp522. 3 helical membrane passes run 588-608, 616-636, and 662-682; these read FAII…LNVM, AILS…PLAL, and LVVP…LGLA.

The protein belongs to the cation transport ATPase (P-type) (TC 3.A.3) family. Type IA subfamily. As to quaternary structure, the system is composed of three essential subunits: KdpA, KdpB and KdpC.

The protein resides in the cell inner membrane. It carries out the reaction K(+)(out) + ATP + H2O = K(+)(in) + ADP + phosphate + H(+). Part of the high-affinity ATP-driven potassium transport (or Kdp) system, which catalyzes the hydrolysis of ATP coupled with the electrogenic transport of potassium into the cytoplasm. This subunit is responsible for energy coupling to the transport system and for the release of the potassium ions to the cytoplasm. The protein is Potassium-transporting ATPase ATP-binding subunit of Salmonella newport (strain SL254).